An 885-amino-acid chain; its full sequence is Alanine--tRNA ligase (885 aa).

The Zn(2+) site is built by His-574, His-578, Cys-685, and His-689.

It belongs to the class-II aminoacyl-tRNA synthetase family. The cofactor is Zn(2+).

It localises to the cytoplasm. It catalyses the reaction tRNA(Ala) + L-alanine + ATP = L-alanyl-tRNA(Ala) + AMP + diphosphate. In terms of biological role, catalyzes the attachment of alanine to tRNA(Ala) in a two-step reaction: alanine is first activated by ATP to form Ala-AMP and then transferred to the acceptor end of tRNA(Ala). Also edits incorrectly charged Ser-tRNA(Ala) and Gly-tRNA(Ala) via its editing domain. This is Alanine--tRNA ligase from Deinococcus geothermalis (strain DSM 11300 / CIP 105573 / AG-3a).